The primary structure comprises 766 residues: Single-minded homolog 1 (766 aa).

One can recognise a bHLH domain in the interval 1–53 (MKEKSKNAARTRREKENSEFYELAKLLPLPSAITSQLDKASIIRLTTSYLKMR). PAS domains lie at 77-147 (GREL…QPYH) and 218-288 (PPSA…LVKG). One can recognise a PAC domain in the interval 292 to 335 (TKYYRFLAKHGGWVWVQSYATIVHNSRSSRPHCIVSVNYVLTDT). Residues 336–766 (EYKGLQLSLD…GTSVIITNGS (431 aa)) form the Single-minded C-terminal domain. A compositionally biased stretch (polar residues) spans 353 to 365 (AFSYTSSSTPTMT). Disordered stretches follow at residues 353 to 431 (AFSY…SQHD) and 528 to 563 (WDED…EPSK). The Nuclear localization signal motif lies at 368–387 (RKGAKSRLSSSKSKSRTSPY). The span at 373 to 385 (SRLSSSKSKSRTS) shows a compositional bias: low complexity. A compositionally biased stretch (basic and acidic residues) spans 394–404 (HTERSESDHDS).

In terms of assembly, efficient DNA binding requires dimerization with another bHLH protein. Heterodimer; forms a heterodimer with ARNT, ARNT2.

It localises to the nucleus. In terms of biological role, transcriptional factor that may have pleiotropic effects during embryogenesis and in the adult. This is Single-minded homolog 1 (SIM1) from Homo sapiens (Human).